The following is an 82-amino-acid chain: Turripeptide Gsp9.2 (82 aa).

The N-terminal stretch at 1–23 is a signal peptide; that stretch reads MMAKLMITVMMVLLLSLQQGADG. The propeptide occupies 24–46; the sequence is RSERWRKNQMAASSIMRNLITAR. 4-hydroxyproline is present on residues P49 and P50. Intrachain disulfides connect C53/C68, C58/C72, and C64/C79. A 4-carboxyglutamate modification is found at E56.

Belongs to the Pg turripeptide superfamily. As to expression, expressed by the venom duct.

It is found in the secreted. This is Turripeptide Gsp9.2 from Gemmula speciosa (Splendid gem-turris).